A 191-amino-acid chain; its full sequence is Putative NADH dehydrogenase/NAD(P)H nitroreductase (191 aa).

Position 127 to 132 (127 to 132 (AAHSLG)) interacts with NAD(+).

Belongs to the nitroreductase family. FMN is required as a cofactor.

This Methanothermobacter thermautotrophicus (strain ATCC 29096 / DSM 1053 / JCM 10044 / NBRC 100330 / Delta H) (Methanobacterium thermoautotrophicum) protein is Putative NADH dehydrogenase/NAD(P)H nitroreductase.